Here is a 219-residue protein sequence, read N- to C-terminus: Mediator of RNA polymerase II transcription subunit 21 (219 aa).

The stretch at 86–125 forms a coiled coil; the sequence is SAEEQLHKIDSLQKKLVDIEDEKIHAIKKKDDLLKQVDDL. Positions 141–219 are disordered; the sequence is SLAPENVQED…ISESISPGKI (79 aa). Composition is skewed to basic and acidic residues over residues 166–181 and 191–204; these read IEQK…KIEG and SDSK…FMDK. The segment covering 210–219 has biased composition (polar residues); sequence ISESISPGKI.

This sequence belongs to the Mediator complex subunit 21 family. Component of the Mediator complex.

It is found in the nucleus. Functionally, component of the Mediator complex, a coactivator involved in the regulated transcription of nearly all RNA polymerase II-dependent genes. Mediator functions as a bridge to convey information from gene-specific regulatory proteins to the basal RNA polymerase II transcription machinery. Mediator is recruited to promoters by direct interactions with regulatory proteins and serves as a scaffold for the assembly of a functional preinitiation complex with RNA polymerase II and the general transcription factors. In Candida glabrata (strain ATCC 2001 / BCRC 20586 / JCM 3761 / NBRC 0622 / NRRL Y-65 / CBS 138) (Yeast), this protein is Mediator of RNA polymerase II transcription subunit 21 (SRB7).